A 496-amino-acid chain; its full sequence is Pseudooxynicotine dehydrogenase (496 aa).

A signal peptide (tat-type signal) is located at residues 1–42 (MTKDGDEGSKSGVSRRKFLGSAAVGVATAGIASQLLTLSAPA). 7 residues coordinate FAD: Ala69, Glu88, Arg96, Trp113, Val285, Ser461, and Ile471.

It belongs to the flavin monoamine oxidase family. As to quaternary structure, homodimer. Requires FAD as cofactor. Post-translationally, predicted to be exported by the Tat system. The position of the signal peptide cleavage has not been experimentally proven.

The protein resides in the periplasm. It catalyses the reaction pseudooxynicotine + 2 Fe(III)-[cytochrome c] + H2O = 4-oxo-4-(pyridin-3-yl)butanal + methylamine + 2 Fe(II)-[cytochrome c] + 2 H(+). Its pathway is alkaloid degradation; nicotine degradation. With respect to regulation, strongly inhibited by Na(2)MoO(4) and FeCl(3). Activity is nearly twice as high in the presence of Na(2)WO(4). Its function is as follows. Involved in nicotine degradation. Catalyzes the deamination of pseudooxynicotine to 3-succinoylsemialdehyde-pyridine. Functions as a dehydrogenase that uses the c-type cytochrome protein CycN as the physiological electron acceptor. O(2) is a poor electron acceptor. Pnao is oxidized by CycN 230 times faster than O(2) at equivalent oxidant concentrations. The polypeptide is Pseudooxynicotine dehydrogenase (Pseudomonas putida (strain DSM 28022 / S16)).